We begin with the raw amino-acid sequence, 254 residues long: MRIDGREKDQLRTVKITTNYIKHAEGSVLIEMGDTRVVCTATVEDKVPPFAKGEGKGWITAEYGMLPRSTETRNVREATKGRQSGRTLEIQRLIGRALRGVVDLKALGERTLWIDCDVIQADGGTRTAAITGSFVALALALNKLVEEGILPVIPLKDFVAAVSVGIVDGEEILDLNFEEDSKALVDMNVVMTGSNRFVEVQGTGEEATFSMEELQRLLTLAQKGIRELIELQKQALGDIARRIGMENAADSNSQ.

Phosphate-binding positions include arginine 86 and glycine 124–arginine 126.

This sequence belongs to the RNase PH family. As to quaternary structure, homohexameric ring arranged as a trimer of dimers.

The enzyme catalyses tRNA(n+1) + phosphate = tRNA(n) + a ribonucleoside 5'-diphosphate. Functionally, phosphorolytic 3'-5' exoribonuclease that plays an important role in tRNA 3'-end maturation. Removes nucleotide residues following the 3'-CCA terminus of tRNAs; can also add nucleotides to the ends of RNA molecules by using nucleoside diphosphates as substrates, but this may not be physiologically important. Probably plays a role in initiation of 16S rRNA degradation (leading to ribosome degradation) during starvation. In Carboxydothermus hydrogenoformans (strain ATCC BAA-161 / DSM 6008 / Z-2901), this protein is Ribonuclease PH.